The following is a 102-amino-acid chain: Small ribosomal subunit protein uS10 (102 aa).

Belongs to the universal ribosomal protein uS10 family. Part of the 30S ribosomal subunit.

Its function is as follows. Involved in the binding of tRNA to the ribosomes. This Acidithiobacillus ferrooxidans (strain ATCC 53993 / BNL-5-31) (Leptospirillum ferrooxidans (ATCC 53993)) protein is Small ribosomal subunit protein uS10.